A 360-amino-acid chain; its full sequence is D-alanine--D-alanine ligase (360 aa).

Residues 139-344 form the ATP-grasp domain; sequence KDVFAQAGLA…YPELIEKLVS (206 aa). 172–227 is a binding site for ATP; sequence EQVLGYPCFVKPANMGSSVGISKCRSKEELQTAFDLAFQYDRRVVVEEGVVGREIE. Residues Asp298, Glu311, and Asn313 each coordinate Mg(2+).

This sequence belongs to the D-alanine--D-alanine ligase family. It depends on Mg(2+) as a cofactor. The cofactor is Mn(2+).

The protein resides in the cytoplasm. The catalysed reaction is 2 D-alanine + ATP = D-alanyl-D-alanine + ADP + phosphate + H(+). Its pathway is cell wall biogenesis; peptidoglycan biosynthesis. Its function is as follows. Cell wall formation. This Bacillus pumilus (strain SAFR-032) protein is D-alanine--D-alanine ligase.